Here is a 47-residue protein sequence, read N- to C-terminus: MNNENSKFGFTAFAENWNGRLAMIGFSSALILELVSGQGVLHFFGIL.

Residues 1–14 (MNNENSKFGFTAFA) are Cytoplasmic-facing. A Chlorophyll-binding motif motif is present at residues 15 to 20 (ENWNGR). A transmembrane helix spans residues 15–36 (ENWNGRLAMIGFSSALILELVS). The Lumenal, thylakoid portion of the chain corresponds to 37 to 47 (GQGVLHFFGIL).

It belongs to the Hlip family. As to quaternary structure, forms heterodimers with both HliA and HliB; these are associated with photosystem II (PSII) assembly intermediates containing CP47 (psbB). In the absence of CP47 (psbB) and HliD, forms a homooligomer in vivo that binds 2 chlorophyll a and 1 beta-carotenoid per monomer. Cofractionates in an approximately 50 kDa fraction the thylakoid membrane with HliD. Associated in vivo with monomeric PSII. Purified in several chlorophyll- and carotenoid-containing complexes, including photosystem II (PSII) assembly intermediate complex RCII* (iD1, D1, D2, PsbE, PsbF, PsbI, Ycf39, Ycf48, HliC and HliD) and the Ycf39-Hlip complex (Ycf39, HliC, HliD and pigments).

The protein resides in the cellular thylakoid membrane. Its function is as follows. Forms a number of heteromers involved in photosystem II (PSII) assembly and/or repair under high light stress. Required for binding of chlorophyll and carotenoids by the Ycf39-Hlip complex. The Ycf39-Hlip complex binds D1 at an early stage of PSII assembly along with Ycf48, ribosomes and ChlG, the last enzyme in chlorophyll biosynthesis; it may be involved in chlorophyll reuse and delivery to D1 in the initial stages of PSII assembly. HliA-HliC and HliB-HliC heterodimers bind chlorophyll and carotenoids in a 1:0.6 ratio. Complexes bind mostly beta-carotenoid, but minor amounts of echinenone and beta-crytoxanthin are also detected. The complexes efficiently quench chlorophyll fluorescence, contributing to photoprotection. Deletion of 4 to 5 members of the Hlip family suggests the proteins are involved in regulation of chlorophyll biosynthesis, in stabilization of chlorophyll-binding proteins and/or in reuse of chlorophylls, and may regulate tetrapyrrole biosynthesis. Might bind chlorophyll and/or carotenoids in association with HliD (called the ScpBE pair). In terms of biological role, the Hlips might regulate tetrapyrrole biosynthesis, maybe at the level of aminolevulinic acid synthesis and probably stabilize PSII assembly intermediates. The polypeptide is High light-inducible protein HliC (hliC) (Synechocystis sp. (strain ATCC 27184 / PCC 6803 / Kazusa)).